The following is a 427-amino-acid chain: MVRLEKKDPLMLARQLPLKSVALILAGGRGTRLKDLTATRAKPAVHFGGKFRIIDFALSNCINSGIRRIGVITQYQSHTLVQHIQRGWSFFSEEMNEFVDLLPAQQRVHGETWYRGTADAVTQNLDIIRRYKAEYVVILAGDHIYKQDYSRMLIDHVEKGARCTVACLPVPVAEARAFGVMAVDENSKVIDFVEKPANPPSMPCDDTKALASMGIYIFDADYLYELLEEDDENESSSHDFGKDIIPKVTYSGEAYAHPFPLSCVQSDPNAEPYWRDVGTLEAYWKANLDLASVTPELDMYDQDWPIRTHMESLPPAKFVQDRSGSHGMTLNSLVSGGCIISGSVVVQSVLFPRVRVNSFCNIDSAVLLPDVWVGRSCRLRRCIIDRACVIPEGMVIGENAEEDARRFYRSEEGIVLVTRDMLARLSA.

3 residues coordinate AMP: Arg40, His46, and Arg52. Tyr114 is an alpha-D-glucose 1-phosphate binding site. Arg130 contacts AMP. Residues Gly179, 194-195 (EK), and Ser212 contribute to the alpha-D-glucose 1-phosphate site. Arg386 contributes to the AMP binding site.

This sequence belongs to the bacterial/plant glucose-1-phosphate adenylyltransferase family. In terms of assembly, homotetramer.

The enzyme catalyses alpha-D-glucose 1-phosphate + ATP + H(+) = ADP-alpha-D-glucose + diphosphate. Its pathway is glycan biosynthesis; glycogen biosynthesis. Allosterically activated by fructose-1,6-bisphosphate (F16BP) and inhibited by AMP. Its function is as follows. Involved in the biosynthesis of ADP-glucose, a building block required for the elongation reactions to produce glycogen. Catalyzes the reaction between ATP and alpha-D-glucose 1-phosphate (G1P) to produce pyrophosphate and ADP-Glc. This is Glucose-1-phosphate adenylyltransferase from Cronobacter sakazakii (strain ATCC BAA-894) (Enterobacter sakazakii).